Here is a 199-residue protein sequence, read N- to C-terminus: Photosystem I reaction center subunit XI (199 aa).

2 consecutive transmembrane segments (helical) span residues 108-128 and 165-185; these read LTAG…LFVL and FWLG…TLHL.

This sequence belongs to the PsaL family.

It localises to the cellular thylakoid membrane. The protein is Photosystem I reaction center subunit XI of Prochlorococcus marinus (strain MIT 9301).